The sequence spans 390 residues: Chorismate synthase 2 (390 aa).

Residues arginine 39 and arginine 45 each contribute to the NADP(+) site. FMN-binding positions include 132 to 134 (RSS), 253 to 254 (NA), glycine 298, 313 to 317 (KPIPT), and arginine 339.

It belongs to the chorismate synthase family. In terms of assembly, homotetramer. Requires FMNH2 as cofactor.

The catalysed reaction is 5-O-(1-carboxyvinyl)-3-phosphoshikimate = chorismate + phosphate. Its pathway is metabolic intermediate biosynthesis; chorismate biosynthesis; chorismate from D-erythrose 4-phosphate and phosphoenolpyruvate: step 7/7. Catalyzes the anti-1,4-elimination of the C-3 phosphate and the C-6 proR hydrogen from 5-enolpyruvylshikimate-3-phosphate (EPSP) to yield chorismate, which is the branch point compound that serves as the starting substrate for the three terminal pathways of aromatic amino acid biosynthesis. This reaction introduces a second double bond into the aromatic ring system. In Bacillus cereus (strain ATCC 14579 / DSM 31 / CCUG 7414 / JCM 2152 / NBRC 15305 / NCIMB 9373 / NCTC 2599 / NRRL B-3711), this protein is Chorismate synthase 2.